A 1107-amino-acid polypeptide reads, in one-letter code: DNA-directed RNA polymerase subunit beta (1107 aa).

Basic and acidic residues predominate over residues D1062 to G1075. The segment at D1062–N1081 is disordered.

It belongs to the RNA polymerase beta chain family. As to quaternary structure, the RNAP catalytic core consists of 2 alpha, 1 beta, 1 beta' and 1 omega subunit. When a sigma factor is associated with the core the holoenzyme is formed, which can initiate transcription.

It carries out the reaction RNA(n) + a ribonucleoside 5'-triphosphate = RNA(n+1) + diphosphate. Its function is as follows. DNA-dependent RNA polymerase catalyzes the transcription of DNA into RNA using the four ribonucleoside triphosphates as substrates. This is DNA-directed RNA polymerase subunit beta from Syntrophomonas wolfei subsp. wolfei (strain DSM 2245B / Goettingen).